Reading from the N-terminus, the 320-residue chain is Citrate synthase (320 aa).

Active-site residues include H249 and D307.

The protein belongs to the citrate synthase family.

The enzyme catalyses oxaloacetate + acetyl-CoA + H2O = citrate + CoA + H(+). Its pathway is carbohydrate metabolism; tricarboxylic acid cycle; isocitrate from oxaloacetate: step 1/2. The polypeptide is Citrate synthase (gltA) (Bartonella doshiae).